We begin with the raw amino-acid sequence, 257 residues long: Ribonuclease HII (257 aa).

An RNase H type-2 domain is found at 72 to 257; that stretch reads TYIAGIDEVG…FAPIKDMIQK (186 aa). Residues D78, E79, and D170 each coordinate a divalent metal cation.

It belongs to the RNase HII family. It depends on Mn(2+) as a cofactor. Requires Mg(2+) as cofactor.

It is found in the cytoplasm. It carries out the reaction Endonucleolytic cleavage to 5'-phosphomonoester.. Functionally, endonuclease that specifically degrades the RNA of RNA-DNA hybrids. This Bacillus cereus (strain B4264) protein is Ribonuclease HII.